The chain runs to 277 residues: 3-methyl-2-oxobutanoate hydroxymethyltransferase (277 aa).

2 residues coordinate Mg(2+): D53 and D96. 3-methyl-2-oxobutanoate contacts are provided by residues 53-54, D96, and K126; that span reads DS. E128 serves as a coordination point for Mg(2+). The active-site Proton acceptor is the E195.

Belongs to the PanB family. In terms of assembly, homodecamer; pentamer of dimers. Mg(2+) is required as a cofactor.

The protein localises to the cytoplasm. It catalyses the reaction 3-methyl-2-oxobutanoate + (6R)-5,10-methylene-5,6,7,8-tetrahydrofolate + H2O = 2-dehydropantoate + (6S)-5,6,7,8-tetrahydrofolate. The protein operates within cofactor biosynthesis; (R)-pantothenate biosynthesis; (R)-pantoate from 3-methyl-2-oxobutanoate: step 1/2. In terms of biological role, catalyzes the reversible reaction in which hydroxymethyl group from 5,10-methylenetetrahydrofolate is transferred onto alpha-ketoisovalerate to form ketopantoate. The chain is 3-methyl-2-oxobutanoate hydroxymethyltransferase from Pelodictyon phaeoclathratiforme (strain DSM 5477 / BU-1).